A 388-amino-acid polypeptide reads, in one-letter code: Succinate--CoA ligase [ADP-forming] subunit beta (388 aa).

An ATP-grasp domain is found at 9–244; sequence KQLFKEFGLP…PSQDDAREAE (236 aa). ATP is bound by residues K46, 53–55, E99, T102, and E107; that span reads GRG. The Mg(2+) site is built by N199 and D213. Residues N264 and 321 to 323 each bind substrate; that span reads GIV.

Belongs to the succinate/malate CoA ligase beta subunit family. Heterotetramer of two alpha and two beta subunits. Mg(2+) serves as cofactor.

It carries out the reaction succinate + ATP + CoA = succinyl-CoA + ADP + phosphate. The enzyme catalyses GTP + succinate + CoA = succinyl-CoA + GDP + phosphate. It participates in carbohydrate metabolism; tricarboxylic acid cycle; succinate from succinyl-CoA (ligase route): step 1/1. Its function is as follows. Succinyl-CoA synthetase functions in the citric acid cycle (TCA), coupling the hydrolysis of succinyl-CoA to the synthesis of either ATP or GTP and thus represents the only step of substrate-level phosphorylation in the TCA. The beta subunit provides nucleotide specificity of the enzyme and binds the substrate succinate, while the binding sites for coenzyme A and phosphate are found in the alpha subunit. The sequence is that of Succinate--CoA ligase [ADP-forming] subunit beta from Idiomarina loihiensis (strain ATCC BAA-735 / DSM 15497 / L2-TR).